The chain runs to 697 residues: Glycine--tRNA ligase beta subunit (697 aa).

Belongs to the class-II aminoacyl-tRNA synthetase family. As to quaternary structure, tetramer of two alpha and two beta subunits.

It localises to the cytoplasm. It carries out the reaction tRNA(Gly) + glycine + ATP = glycyl-tRNA(Gly) + AMP + diphosphate. This is Glycine--tRNA ligase beta subunit from Cereibacter sphaeroides (strain ATCC 17029 / ATH 2.4.9) (Rhodobacter sphaeroides).